The chain runs to 169 residues: Lipoprotein signal peptidase (169 aa).

Helical transmembrane passes span 15-35 (WLWL…VVMN), 47-67 (ILPF…SFLS), 75-95 (WLFT…MSKL), and 107-127 (AMII…GFVV). Catalysis depends on residues Asp128 and Asp146. Residues 141–161 (AFNLADMAICLGAAMIILDGF) form a helical membrane-spanning segment.

It belongs to the peptidase A8 family.

The protein localises to the cell inner membrane. The catalysed reaction is Release of signal peptides from bacterial membrane prolipoproteins. Hydrolyzes -Xaa-Yaa-Zaa-|-(S,diacylglyceryl)Cys-, in which Xaa is hydrophobic (preferably Leu), and Yaa (Ala or Ser) and Zaa (Gly or Ala) have small, neutral side chains.. Its pathway is protein modification; lipoprotein biosynthesis (signal peptide cleavage). Its function is as follows. This protein specifically catalyzes the removal of signal peptides from prolipoproteins. In Vibrio parahaemolyticus serotype O3:K6 (strain RIMD 2210633), this protein is Lipoprotein signal peptidase.